The following is a 105-amino-acid chain: Thioredoxin (105 aa).

The Thioredoxin domain maps to Val2 to Ile105. Lys3 is subject to N6-acetyllysine. The residue at position 8 (Lys8) is an N6-succinyllysine. Residues Cys32 and Cys35 each act as nucleophile in the active site. A disulfide bridge links Cys32 with Cys35. An N6-acetyllysine modification is found at Lys39. S-nitrosocysteine occurs at positions 62 and 69. Residue Cys73 is modified to S-nitrosocysteine; alternate. At Lys94 the chain carries N6-acetyllysine; alternate. N6-succinyllysine; alternate is present on Lys94.

The protein belongs to the thioredoxin family. Homodimer; disulfide-linked. Interacts with TXNIP through the redox-active site. Interacts with MAP3K5 and CASP3. Interacts with APEX1; the interaction stimulates the FOS/JUN AP-1 DNA-binding activity in a redox-dependent manner. Post-translationally, in the fully reduced protein, both Cys-69 and Cys-73 are nitrosylated in response to nitric oxide (NO). When two disulfide bonds are present in the protein, only Cys-73 is nitrosylated. Cys-73 can serve as donor for nitrosylation of target proteins.

It localises to the nucleus. The protein localises to the cytoplasm. It is found in the secreted. In terms of biological role, participates in various redox reactions through the reversible oxidation of its active center dithiol to a disulfide and catalyzes dithiol-disulfide exchange reactions. Plays a role in the reversible S-nitrosylation of cysteine residues in target proteins, and thereby contributes to the response to intracellular nitric oxide. Nitrosylates the active site Cys of CASP3 in response to nitric oxide (NO), and thereby inhibits caspase-3 activity. Induces the FOS/JUN AP-1 DNA binding activity in ionizing radiation (IR) cells through its oxidation/reduction status and stimulates AP-1 transcriptional activity. This Ovis aries (Sheep) protein is Thioredoxin (TXN).